Consider the following 96-residue polypeptide: UPF0235 protein YggU (96 aa).

The protein belongs to the UPF0235 family.

The polypeptide is UPF0235 protein YggU (Salmonella agona (strain SL483)).